The sequence spans 215 residues: Glutathione S-transferase F10 (215 aa).

The GST N-terminal domain occupies 2–81 (VLTIYAPLFA…YIAEKYRSQG (80 aa)). Residues 11-12 (AS), 39-40 (QR), 52-53 (KI), and 65-66 (ES) contribute to the glutathione site. Residues 88–215 (TIEERGQVEQ…EVSAKYSLPV (128 aa)) form the GST C-terminal domain.

The protein belongs to the GST superfamily. Phi family. In terms of assembly, interacts with BAK1. As to expression, expressed in roots, stems, floral buds, mature flowers and leaves.

Its subcellular location is the cytoplasm. It localises to the cytosol. It carries out the reaction RX + glutathione = an S-substituted glutathione + a halide anion + H(+). Its function is as follows. In vitro, possesses glutathione S-transferase activity toward 1-chloro-2,4-dinitrobenzene (CDNB) and benzyl isothiocyanate (BITC). May be involved in the conjugation of reduced glutathione to a wide number of exogenous and endogenous hydrophobic electrophiles and have a detoxification role against certain herbicides. In Arabidopsis thaliana (Mouse-ear cress), this protein is Glutathione S-transferase F10.